We begin with the raw amino-acid sequence, 132 residues long: Small ribosomal subunit protein uS8 (132 aa).

This sequence belongs to the universal ribosomal protein uS8 family. In terms of assembly, part of the 30S ribosomal subunit. Contacts proteins S5 and S12.

Functionally, one of the primary rRNA binding proteins, it binds directly to 16S rRNA central domain where it helps coordinate assembly of the platform of the 30S subunit. The chain is Small ribosomal subunit protein uS8 from Syntrophobacter fumaroxidans (strain DSM 10017 / MPOB).